Reading from the N-terminus, the 164-residue chain is ATP synthase subunit b (164 aa).

A helical membrane pass occupies residues 10–32 (AVAFVLFFVLFGKKLWTPLAAAL).

This sequence belongs to the ATPase B chain family. As to quaternary structure, F-type ATPases have 2 components, F(1) - the catalytic core - and F(0) - the membrane proton channel. F(1) has five subunits: alpha(3), beta(3), gamma(1), delta(1), epsilon(1). F(0) has three main subunits: a(1), b(2) and c(10-14). The alpha and beta chains form an alternating ring which encloses part of the gamma chain. F(1) is attached to F(0) by a central stalk formed by the gamma and epsilon chains, while a peripheral stalk is formed by the delta and b chains.

Its subcellular location is the cell inner membrane. Functionally, f(1)F(0) ATP synthase produces ATP from ADP in the presence of a proton or sodium gradient. F-type ATPases consist of two structural domains, F(1) containing the extramembraneous catalytic core and F(0) containing the membrane proton channel, linked together by a central stalk and a peripheral stalk. During catalysis, ATP synthesis in the catalytic domain of F(1) is coupled via a rotary mechanism of the central stalk subunits to proton translocation. Its function is as follows. Component of the F(0) channel, it forms part of the peripheral stalk, linking F(1) to F(0). The chain is ATP synthase subunit b from Gluconacetobacter diazotrophicus (strain ATCC 49037 / DSM 5601 / CCUG 37298 / CIP 103539 / LMG 7603 / PAl5).